The primary structure comprises 272 residues: MTAPAIHPSAVIESGARIGDGARIGPFCHVGPEVVLGADCELISHVVLAGRTTIGPRTRIFPFASIGHQPQDLKYRGEASTLTIGADCLIREGVTMNPGTSGGGLETLVGDHCTFLANSHVGHDCRVGAHVIFSNNVMLAGHCSVGDYAILGGGAAVIQFARVGAHAFVGGLSGLENDCIPYGMVLGNRAYLSGLNIIGLQRRGFAREDIHALRRAYRLLFAPEGTLMERVEDVAATFESHAAVAEILDFIRLGGKRSICTPREVPTPISAA.

This sequence belongs to the transferase hexapeptide repeat family. LpxA subfamily. In terms of assembly, homotrimer.

The protein resides in the cytoplasm. It carries out the reaction a (3R)-hydroxyacyl-[ACP] + UDP-N-acetyl-alpha-D-glucosamine = a UDP-3-O-[(3R)-3-hydroxyacyl]-N-acetyl-alpha-D-glucosamine + holo-[ACP]. It participates in glycolipid biosynthesis; lipid IV(A) biosynthesis; lipid IV(A) from (3R)-3-hydroxytetradecanoyl-[acyl-carrier-protein] and UDP-N-acetyl-alpha-D-glucosamine: step 1/6. Its function is as follows. Involved in the biosynthesis of lipid A, a phosphorylated glycolipid that anchors the lipopolysaccharide to the outer membrane of the cell. The polypeptide is Acyl-[acyl-carrier-protein]--UDP-N-acetylglucosamine O-acyltransferase (Methylobacterium radiotolerans (strain ATCC 27329 / DSM 1819 / JCM 2831 / NBRC 15690 / NCIMB 10815 / 0-1)).